The primary structure comprises 449 residues: Tubulin beta-8 chain (449 aa).

Residues glutamine 11, glutamate 69, serine 138, glycine 142, threonine 143, glycine 144, asparagine 204, and asparagine 226 each coordinate GTP. Glutamate 69 is a Mg(2+) binding site. The segment at 428 to 449 is disordered; that stretch reads ATADEEEGYEYEEDEVEVQEEQ. Over residues 429–449 the composition is skewed to acidic residues; sequence TADEEEGYEYEEDEVEVQEEQ.

This sequence belongs to the tubulin family. Dimer of alpha and beta chains. A typical microtubule is a hollow water-filled tube with an outer diameter of 25 nm and an inner diameter of 15 nM. Alpha-beta heterodimers associate head-to-tail to form protofilaments running lengthwise along the microtubule wall with the beta-tubulin subunit facing the microtubule plus end conferring a structural polarity. Microtubules usually have 13 protofilaments but different protofilament numbers can be found in some organisms and specialized cells. The cofactor is Mg(2+).

It is found in the cytoplasm. It localises to the cytoskeleton. In terms of biological role, tubulin is the major constituent of microtubules, a cylinder consisting of laterally associated linear protofilaments composed of alpha- and beta-tubulin heterodimers. Microtubules grow by the addition of GTP-tubulin dimers to the microtubule end, where a stabilizing cap forms. Below the cap, tubulin dimers are in GDP-bound state, owing to GTPase activity of alpha-tubulin. This is Tubulin beta-8 chain (TUBB8) from Arabidopsis thaliana (Mouse-ear cress).